The following is a 689-amino-acid chain: E3 ubiquitin-protein ligase RNF43 (689 aa).

The signal sequence occupies residues 1–27 (MNRARLQLASLWLLLTVTLQAVASAMG). Residues 28 to 191 (TTEREMDVKA…VQEQPKWLHH (164 aa)) lie on the Extracellular side of the membrane. N-linked (GlcNAc...) asparagine glycosylation is found at N56 and N86. An intrachain disulfide couples C85 to C113. A helical transmembrane segment spans residues 192–212 (DIWILLTVAGTVMFFVLYAVA). Over 213 to 689 (RLLCRQPPPQ…EIEAVCEHAV (477 aa)) the chain is Cytoplasmic. The RING-type; atypical zinc finger occupies 268–308 (CAICLEEFTDGQELRILPCCHEYHLGCVDPWLRQNHTCPLC). Disordered stretches follow at residues 386 to 430 (QMRT…HGSS), 445 to 467 (TSSS…ALAS), and 492 to 639 (VHFH…MSES). Composition is skewed to low complexity over residues 408–430 (DSSG…HGSS) and 446–461 (SSSS…EDSS). 2 stretches are compositionally biased toward basic residues: residues 492–504 (VHFH…HYRR) and 512–523 (SHPHRSKRRTKV). Residues 574–588 (QQSMPQAASVVQGSS) show a composition bias toward polar residues.

This sequence belongs to the ZNRF3 family.

It is found in the cell membrane. The protein localises to the endoplasmic reticulum membrane. The protein resides in the nucleus envelope. The catalysed reaction is S-ubiquitinyl-[E2 ubiquitin-conjugating enzyme]-L-cysteine + [acceptor protein]-L-lysine = [E2 ubiquitin-conjugating enzyme]-L-cysteine + N(6)-ubiquitinyl-[acceptor protein]-L-lysine.. The protein operates within protein modification; protein ubiquitination. Its function is as follows. E3 ubiquitin-protein ligase that acts as a negative regulator of the Wnt signaling pathway by mediating the ubiquitination, endocytosis and subsequent degradation of Wnt receptor complex components Frizzled. Acts on both canonical and non-canonical Wnt signaling pathway. Along with RSPO2 and ZNRF3, constitutes a master switch that governs limb specification. In Xenopus tropicalis (Western clawed frog), this protein is E3 ubiquitin-protein ligase RNF43 (rnf43).